A 97-amino-acid chain; its full sequence is Co-chaperonin GroES (97 aa).

This sequence belongs to the GroES chaperonin family. In terms of assembly, heptamer of 7 subunits arranged in a ring. Interacts with the chaperonin GroEL.

The protein localises to the cytoplasm. Together with the chaperonin GroEL, plays an essential role in assisting protein folding. The GroEL-GroES system forms a nano-cage that allows encapsulation of the non-native substrate proteins and provides a physical environment optimized to promote and accelerate protein folding. GroES binds to the apical surface of the GroEL ring, thereby capping the opening of the GroEL channel. This chain is Co-chaperonin GroES, found in Baumannia cicadellinicola subsp. Homalodisca coagulata.